The primary structure comprises 212 residues: Thymidylate kinase (212 aa).

11–18 (GPEGAGKT) provides a ligand contact to ATP.

Belongs to the thymidylate kinase family.

It carries out the reaction dTMP + ATP = dTDP + ADP. Functionally, phosphorylation of dTMP to form dTDP in both de novo and salvage pathways of dTTP synthesis. This Streptococcus pneumoniae (strain ATCC 700669 / Spain 23F-1) protein is Thymidylate kinase.